Consider the following 313-residue polypeptide: Proline iminopeptidase (313 aa).

One can recognise an AB hydrolase-1 domain in the interval 35-298 (KPVVILHGGP…TPGAGHSAFE (264 aa)). Residue S110 is the Nucleophile of the active site. D266 is a catalytic residue. The active-site Proton donor is H294.

The protein belongs to the peptidase S33 family.

It localises to the cytoplasm. The enzyme catalyses Release of N-terminal proline from a peptide.. Its function is as follows. Specifically catalyzes the removal of N-terminal proline residues from peptides. The polypeptide is Proline iminopeptidase (pip) (Xylella fastidiosa (strain 9a5c)).